Reading from the N-terminus, the 318-residue chain is Galactofuranose-binding protein YtfQ (318 aa).

The N-terminal stretch at 1–21 (MWKRLLIVSAVSAAMSSMALA) is a signal peptide. Beta-D-galactofuranose is bound by residues 34–38 (ESGWR), 111–112 (DR), arginine 167, asparagine 220, and aspartate 248. Cysteine 150 and cysteine 214 form a disulfide bridge.

This sequence belongs to the bacterial solute-binding protein 2 family. The complex is composed of two ATP-binding proteins (YtfR), two transmembrane proteins (YtfT and YjfF) and a solute-binding protein (YtfQ).

The protein resides in the periplasm. Functionally, part of the ABC transporter complex YtfQRT-YjfF involved in galactofuranose transport. Binds to both alpha- and beta-galactofuranose. The chain is Galactofuranose-binding protein YtfQ (ytfQ) from Escherichia coli (strain K12).